The chain runs to 217 residues: 3,4-dihydroxy-2-butanone 4-phosphate synthase (217 aa).

Residues 37–38 (RE), D42, 150–154 (RRGHT), and E174 contribute to the D-ribulose 5-phosphate site. Mg(2+) is bound at residue E38. H153 lines the Mg(2+) pocket.

This sequence belongs to the DHBP synthase family. Homodimer. Requires Mg(2+) as cofactor. It depends on Mn(2+) as a cofactor.

The enzyme catalyses D-ribulose 5-phosphate = (2S)-2-hydroxy-3-oxobutyl phosphate + formate + H(+). It participates in cofactor biosynthesis; riboflavin biosynthesis; 2-hydroxy-3-oxobutyl phosphate from D-ribulose 5-phosphate: step 1/1. Functionally, catalyzes the conversion of D-ribulose 5-phosphate to formate and 3,4-dihydroxy-2-butanone 4-phosphate. This chain is 3,4-dihydroxy-2-butanone 4-phosphate synthase, found in Shewanella putrefaciens (strain CN-32 / ATCC BAA-453).